The following is a 170-amino-acid chain: Ribosome maturation factor RimM (170 aa).

One can recognise a PRC barrel domain in the interval 97–170 (KNEFYWTDLI…QIRVEWGSDW (74 aa)).

The protein belongs to the RimM family. In terms of assembly, binds ribosomal protein uS19.

Its subcellular location is the cytoplasm. In terms of biological role, an accessory protein needed during the final step in the assembly of 30S ribosomal subunit, possibly for assembly of the head region. Essential for efficient processing of 16S rRNA. May be needed both before and after RbfA during the maturation of 16S rRNA. It has affinity for free ribosomal 30S subunits but not for 70S ribosomes. The polypeptide is Ribosome maturation factor RimM (Dechloromonas aromatica (strain RCB)).